The primary structure comprises 585 residues: 2-succinyl-5-enolpyruvyl-6-hydroxy-3-cyclohexene-1-carboxylate synthase (585 aa).

It belongs to the TPP enzyme family. MenD subfamily. Homodimer. The cofactor is Mg(2+). Mn(2+) serves as cofactor. It depends on thiamine diphosphate as a cofactor.

It catalyses the reaction isochorismate + 2-oxoglutarate + H(+) = 5-enolpyruvoyl-6-hydroxy-2-succinyl-cyclohex-3-ene-1-carboxylate + CO2. Its pathway is quinol/quinone metabolism; 1,4-dihydroxy-2-naphthoate biosynthesis; 1,4-dihydroxy-2-naphthoate from chorismate: step 2/7. It participates in cofactor biosynthesis; phylloquinone biosynthesis. Its function is as follows. Catalyzes the thiamine diphosphate-dependent decarboxylation of 2-oxoglutarate and the subsequent addition of the resulting succinic semialdehyde-thiamine pyrophosphate anion to isochorismate to yield 2-succinyl-5-enolpyruvyl-6-hydroxy-3-cyclohexene-1-carboxylate (SEPHCHC). This Crocosphaera subtropica (strain ATCC 51142 / BH68) (Cyanothece sp. (strain ATCC 51142)) protein is 2-succinyl-5-enolpyruvyl-6-hydroxy-3-cyclohexene-1-carboxylate synthase.